The sequence spans 195 residues: Penicillin-binding protein activator LpoB (195 aa).

A signal peptide spans 1–16 (MKKYLFVALAALVLTG). Cys17 is lipidated: N-palmitoyl cysteine. Residue Cys17 is the site of S-diacylglycerol cysteine attachment. Residues 19 to 55 (SRPPEPEQPQPPVTVEPVTPPVVEEPQPPVTEPVPQP) form a disordered region. Pro residues-rich tracts occupy residues 24 to 38 (PEQP…PVTP) and 44 to 55 (PQPPVTEPVPQP).

The protein belongs to the LpoB family. In terms of assembly, interacts with PBP1b.

The protein resides in the cell outer membrane. In terms of biological role, regulator of peptidoglycan synthesis that is essential for the function of penicillin-binding protein 1B (PBP1b). This is Penicillin-binding protein activator LpoB from Serratia proteamaculans (strain 568).